Here is a 323-residue protein sequence, read N- to C-terminus: tRNA dimethylallyltransferase (323 aa).

Residue 18–25 coordinates ATP; the sequence is GPTASGKS. 20–25 is a binding site for substrate; that stretch reads TASGKS. Interaction with substrate tRNA stretches follow at residues 43–46, 167–171, and 249–254; these read DSAQ, QRIQR, and RCVGYR.

Belongs to the IPP transferase family. As to quaternary structure, monomer. The cofactor is Mg(2+).

It carries out the reaction adenosine(37) in tRNA + dimethylallyl diphosphate = N(6)-dimethylallyladenosine(37) in tRNA + diphosphate. Its function is as follows. Catalyzes the transfer of a dimethylallyl group onto the adenine at position 37 in tRNAs that read codons beginning with uridine, leading to the formation of N6-(dimethylallyl)adenosine (i(6)A). This chain is tRNA dimethylallyltransferase, found in Nitrosospira multiformis (strain ATCC 25196 / NCIMB 11849 / C 71).